We begin with the raw amino-acid sequence, 704 residues long: Mannan-binding lectin serine protease 1 (704 aa).

The signal sequence occupies residues 1 to 24 (MRFLSFRRLLLYHVLCLTLTEVSA). A CUB 1 domain is found at 25–143 (HTVELNEMFG…TGFDAHYMAV (119 aa)). The segment at 25–189 (HTVELNEMFG…HTDNRTCRVE (165 aa)) is homodimerization. Residues 25–189 (HTVELNEMFG…HTDNRTCRVE (165 aa)) are interaction with MBL2. The tract at residues 25–283 (HTVELNEMFG…STQSHSIQIL (259 aa)) is interaction with FCN2. The tract at residues 25–305 (HTVELNEMFG…RLSYRAAGNE (281 aa)) is interaction with MBL1. Asn-54 is a glycosylation site (N-linked (GlcNAc...) asparagine). Residues Glu-73, Asp-81, Asp-126, Ser-128, Asp-144, Val-145, and Glu-147 each contribute to the Ca(2+) site. The cysteines at positions 78 and 96 are disulfide-linked. Positions 144–187 (DVDECKEREDEELSCDHYCHNYIGGYYCSCRFGYILHTDNRTCR) constitute an EGF-like; calcium-binding domain. 4 disulfide bridges follow: Cys-148-Cys-162, Cys-158-Cys-171, Cys-173-Cys-186, and Cys-190-Cys-217. Positions 164, 165, and 168 each coordinate Ca(2+). Asn-164 is subject to (3R)-3-hydroxyasparagine. N-linked (GlcNAc...) asparagine glycosylation occurs at Asn-183. Residues 190-302 (CSGNLFTQRT…RGWRLSYRAA (113 aa)) form the CUB 2 domain. Ca(2+) is bound by residues Glu-240, Asp-250, Asp-287, and Ser-289. Cys-247 and Cys-265 are oxidised to a cystine. 2 consecutive Sushi domains span residues 304–369 (NECP…TCKI) and 370–439 (VDCG…TCLP). Disulfide bonds link Cys-306–Cys-354, Cys-334–Cys-367, Cys-372–Cys-419, Cys-402–Cys-437, Cys-441–Cys-577, and Cys-480–Cys-496. 2 N-linked (GlcNAc...) asparagine glycosylation sites follow: Asn-390 and Asn-412. The region spanning 454-701 (IFNGRPAQKG…NKDWIQRVTG (248 aa)) is the Peptidase S1 domain. His-495 (charge relay system) is an active-site residue. Leu-538 carries N-linked (GlcNAc...) asparagine glycosylation. The active-site Charge relay system is Asp-557. N-linked (GlcNAc...) asparagine glycosylation occurs at Glu-604. 2 disulfide bridges follow: Cys-619/Cys-636 and Cys-647/Cys-677. The Charge relay system role is filled by Ser-651.

Belongs to the peptidase S1 family. As to quaternary structure, homodimer. Interacts with the oligomeric lectins MBL2, FCN2 and FCN3; triggers the lectin pathway of complement through activation of C3. Interacts with SERPING1. Interacts with COLEC11; probably triggers the lectin pathway of complement. In terms of processing, the iron and 2-oxoglutarate dependent 3-hydroxylation of aspartate and asparagine is (R) stereospecific within EGF domains. N-glycosylated. Some N-linked glycan are of the complex-type. Post-translationally, autoproteolytic processing of the proenzyme produces the active enzyme composed on the heavy and the light chain held together by a disulfide bond. Isoform 1 but not isoform 2 is activated through autoproteolytic processing. In terms of tissue distribution, protein of the plasma which is primarily expressed by liver.

Its subcellular location is the secreted. Inhibited by SERPING1 and A2M. Functions in the lectin pathway of complement, which performs a key role in innate immunity by recognizing pathogens through patterns of sugar moieties and neutralizing them. The lectin pathway is triggered upon binding of mannan-binding lectin (MBL) and ficolins to sugar moieties which leads to activation of the associated proteases MASP1 and MASP2. Functions as an endopeptidase and may activate MASP2 or C2 or directly activate C3 the key component of complement reaction. Isoform 2 may have an inhibitory effect on the activation of the lectin pathway of complement or may cleave IGFBP5. Also plays a role in development. The chain is Mannan-binding lectin serine protease 1 (Masp1) from Rattus norvegicus (Rat).